A 144-amino-acid chain; its full sequence is L-fucose mutarotase (144 aa).

His22 acts as the Proton donor in catalysis. Substrate contacts are provided by residues Asp30, Arg109, and 131-133 (YGN).

This sequence belongs to the RbsD / FucU family. FucU mutarotase subfamily. As to quaternary structure, homodecamer.

It localises to the cytoplasm. It carries out the reaction alpha-L-fucose = beta-L-fucose. It participates in carbohydrate metabolism; L-fucose metabolism. In terms of biological role, involved in the anomeric conversion of L-fucose. This chain is L-fucose mutarotase, found in Histophilus somni (strain 129Pt) (Haemophilus somnus).